The following is a 451-amino-acid chain: Tubulin alpha-3 chain (451 aa).

Position 11 (Gln11) interacts with GTP. Lys40 carries the N6-acetyllysine modification. GTP contacts are provided by Glu71, Ser140, Gly144, Thr145, Thr179, Asn206, and Asn228. Glu71 contributes to the Mg(2+) binding site. Glu254 is an active-site residue.

It belongs to the tubulin family. In terms of assembly, dimer of alpha and beta chains. A typical microtubule is a hollow water-filled tube with an outer diameter of 25 nm and an inner diameter of 15 nM. Alpha-beta heterodimers associate head-to-tail to form protofilaments running lengthwise along the microtubule wall with the beta-tubulin subunit facing the microtubule plus end conferring a structural polarity. Microtubules usually have 13 protofilaments but different protofilament numbers can be found in some organisms and specialized cells. The cofactor is Mg(2+). Undergoes a tyrosination/detyrosination cycle, the cyclic removal and re-addition of a C-terminal tyrosine residue by the enzymes tubulin tyrosine carboxypeptidase (TTCP) and tubulin tyrosine ligase (TTL), respectively. In terms of processing, acetylation of alpha chains at Lys-40 stabilizes microtubules and affects affinity and processivity of microtubule motors. This modification has a role in multiple cellular functions, ranging from cell motility, cell cycle progression or cell differentiation to intracellular trafficking and signaling.

It is found in the cytoplasm. The protein resides in the cytoskeleton. It catalyses the reaction GTP + H2O = GDP + phosphate + H(+). Functionally, tubulin is the major constituent of microtubules, a cylinder consisting of laterally associated linear protofilaments composed of alpha- and beta-tubulin heterodimers. Microtubules grow by the addition of GTP-tubulin dimers to the microtubule end, where a stabilizing cap forms. Below the cap, tubulin dimers are in GDP-bound state, owing to GTPase activity of alpha-tubulin. In Homarus americanus (American lobster), this protein is Tubulin alpha-3 chain.